A 707-amino-acid polypeptide reads, in one-letter code: DNA-binding protein RFX2 (707 aa).

Ser-33 carries the phosphoserine modification. A DNA-binding region (RFX-type winged-helix) is located at residues 204 to 279; it reads HLQWLLDNYE…YHYYGIRLKP (76 aa). A disordered region spans residues 297 to 337; sequence QQPVHQKPRYRPAQKTDSLGESGSHSSLHSTPEQAMAAQSQ. Over residues 315–337 the composition is skewed to low complexity; it reads LGESGSHSSLHSTPEQAMAAQSQ. Ser-420 bears the Phosphoserine mark.

This sequence belongs to the RFX family. In terms of assembly, homodimer; probably only forms homodimers in testis. Heterodimer; heterodimerizes with RFX1 and RFX3.

The protein localises to the nucleus. The protein resides in the cytoplasm. Transcription factor that acts as a key regulator of spermatogenesis. Acts by regulating expression of genes required for the haploid phase during spermiogenesis, such as genes required for cilium assembly and function. Recognizes and binds the X-box, a regulatory motif with DNA sequence 5'-GTNRCC(0-3N)RGYAAC-3' present on promoters. Probably activates transcription of the testis-specific histone gene H1-6. The polypeptide is DNA-binding protein RFX2 (RFX2) (Bos taurus (Bovine)).